Reading from the N-terminus, the 332-residue chain is L-lactate dehydrogenase A chain (332 aa).

Residues 29–57 and R99 each bind NAD(+); that span reads GMVGMASAISILLKDLCDELALVDVMEDK. Substrate contacts are provided by R106, N138, and R169. NAD(+) is bound at residue N138. The active-site Proton acceptor is H193. Substrate is bound at residue T248.

The protein belongs to the LDH/MDH superfamily. LDH family. Homotetramer.

The protein localises to the cytoplasm. The enzyme catalyses (S)-lactate + NAD(+) = pyruvate + NADH + H(+). It participates in fermentation; pyruvate fermentation to lactate; (S)-lactate from pyruvate: step 1/1. Interconverts simultaneously and stereospecifically pyruvate and lactate with concomitant interconversion of NADH and NAD(+). This chain is L-lactate dehydrogenase A chain (ldha), found in Gillichthys seta (Shortjaw mudsucker).